Here is a 128-residue protein sequence, read N- to C-terminus: Saitohin (128 aa).

Residues 77-128 are disordered; the sequence is SYSSEESSRNGAEQGRQLSIEGPFQGQNCPSHPAAALPLPMRGESQATSCQV.

Interacts with PRDX6.

It localises to the cytoplasm. The protein resides in the nucleus. The protein is Saitohin (STH) of Gorilla gorilla gorilla (Western lowland gorilla).